The sequence spans 461 residues: Alcaligin biosynthesis enzyme (461 aa).

9-15 provides a ligand contact to FAD; the sequence is VAIGIGP.

Belongs to the lysine N(6)-hydroxylase/L-ornithine N(5)-oxygenase family. Requires FAD as cofactor.

It participates in siderophore biosynthesis; alcaligin biosynthesis. The protein is Alcaligin biosynthesis enzyme (alcA) of Bordetella parapertussis (strain 12822 / ATCC BAA-587 / NCTC 13253).